The chain runs to 107 residues: Serine palmitoyltransferase-regulating protein TSC3 (107 aa).

Residues 72–92 (VFFLVVFTLSLFGLLKWVLSL) form a helical membrane-spanning segment.

Its subcellular location is the endoplasmic reticulum membrane. Stimulates the activity of serine palmitoyltransferase (SPT). The sequence is that of Serine palmitoyltransferase-regulating protein TSC3 (TSC3) from Eremothecium gossypii (strain ATCC 10895 / CBS 109.51 / FGSC 9923 / NRRL Y-1056) (Yeast).